The primary structure comprises 1009 residues: Ulvan lyase, long isoform (1009 aa).

The first 32 residues, 1-32 (MTAQKSKYFNRIMTMNTLLFSLLTVGFSQAYA), serve as a signal peptide directing secretion. 137–138 (SH) is a binding site for substrate. His138 functions as the Proton donor/acceptor in the catalytic mechanism. Ca(2+) contacts are provided by Asp200, Asp210, and Lys212. Substrate is bound by residues Tyr291 and Arg308. Residues Asp311, Asp314, and Tyr316 each contribute to the Ca(2+) site. Tyr372 is a substrate binding site.

Belongs to the polysaccharide lyase 24 family.

Ulvan lyase involved in ulvan degradation. Ulvan is the main polysaccharide component of the Ulvales (green seaweed) cell wall. It is composed of disaccharide building blocks comprising 3-sulfated rhamnose (Rha3S) linked to D-glucuronic acid (GlcA), L-iduronic acid (IduA), or D-xylose (Xyl). Ulvan lyase catalyzes preferentially the endolytic cleavage of the glycosidic bond between Rha3S and the uronic acid GlcA, but not IduA, producing oligosaccharides that have unsaturated 4-deoxy-L-threo-hex-4-enopyranosiduronic acid (deltaUA) at the non-reducing end. The most abundant end products in the degradation of the ulvan polysaccharide were deltaUA-Rha3S disaccharides and deltaUA-Rha3S-IduA-Rha3S and deltaUA-Rha3S-Xyl-Rha3S tetrasaccharides. The protein is Ulvan lyase, long isoform (ullA) of Glaciecola sp. (strain KUL10).